Consider the following 969-residue polypeptide: RNA polymerase-associated protein RapA (969 aa).

In terms of domain architecture, Helicase ATP-binding spans 164–334 (EVGRRYAPRV…FARLRLLDPD (171 aa)). Residue 177–184 (DEVGLGKT) coordinates ATP. The short motif at 280–283 (DEAH) is the DEAH box element. The 181-residue stretch at 492 to 672 (RVNWLLELLK…GLEPLIEESA (181 aa)) folds into the Helicase C-terminal domain.

It belongs to the SNF2/RAD54 helicase family. RapA subfamily. Interacts with the RNAP. Has a higher affinity for the core RNAP than for the holoenzyme. Its ATPase activity is stimulated by binding to RNAP.

Its function is as follows. Transcription regulator that activates transcription by stimulating RNA polymerase (RNAP) recycling in case of stress conditions such as supercoiled DNA or high salt concentrations. Probably acts by releasing the RNAP, when it is trapped or immobilized on tightly supercoiled DNA. Does not activate transcription on linear DNA. Probably not involved in DNA repair. This is RNA polymerase-associated protein RapA from Aliivibrio salmonicida (strain LFI1238) (Vibrio salmonicida (strain LFI1238)).